The sequence spans 487 residues: Glutamate--tRNA ligase (487 aa).

The short motif at 11–21 (PSPTGYPHLGN) is the 'HIGH' region element. Residues Cys108, Cys110, Cys135, and Asp137 each contribute to the Zn(2+) site. Positions 245 to 249 (KLSKR) match the 'KMSKS' region motif. Lys248 lines the ATP pocket.

The protein belongs to the class-I aminoacyl-tRNA synthetase family. Glutamate--tRNA ligase type 1 subfamily. In terms of assembly, monomer. Requires Zn(2+) as cofactor.

It localises to the cytoplasm. It catalyses the reaction tRNA(Glu) + L-glutamate + ATP = L-glutamyl-tRNA(Glu) + AMP + diphosphate. Catalyzes the attachment of glutamate to tRNA(Glu) in a two-step reaction: glutamate is first activated by ATP to form Glu-AMP and then transferred to the acceptor end of tRNA(Glu). This chain is Glutamate--tRNA ligase, found in Dehalococcoides mccartyi (strain ATCC BAA-2100 / JCM 16839 / KCTC 5957 / BAV1).